The following is a 328-amino-acid chain: DNA-directed RNA polymerase subunit alpha (328 aa).

An alpha N-terminal domain (alpha-NTD) region spans residues 1 to 234; it reads MQNSTTEFLK…DQMSIFADLQ (234 aa). The segment at 248–328 is alpha C-terminal domain (alpha-CTD); that stretch reads IDPVLLRPVD…AWPPVGLEKP (81 aa).

Belongs to the RNA polymerase alpha chain family. As to quaternary structure, homodimer. The RNAP catalytic core consists of 2 alpha, 1 beta, 1 beta' and 1 omega subunit. When a sigma factor is associated with the core the holoenzyme is formed, which can initiate transcription.

The catalysed reaction is RNA(n) + a ribonucleoside 5'-triphosphate = RNA(n+1) + diphosphate. Its function is as follows. DNA-dependent RNA polymerase catalyzes the transcription of DNA into RNA using the four ribonucleoside triphosphates as substrates. This Neisseria meningitidis serogroup A / serotype 4A (strain DSM 15465 / Z2491) protein is DNA-directed RNA polymerase subunit alpha.